Consider the following 161-residue polypeptide: 2-C-methyl-D-erythritol 2,4-cyclodiphosphate synthase (161 aa).

Residues aspartate 11 and histidine 13 each contribute to the a divalent metal cation site. 4-CDP-2-C-methyl-D-erythritol 2-phosphate contacts are provided by residues 11-13 (DIH) and 37-38 (HS). Histidine 45 is an a divalent metal cation binding site. Residues 59 to 61 (DIG) and 135 to 138 (TTNE) contribute to the 4-CDP-2-C-methyl-D-erythritol 2-phosphate site.

This sequence belongs to the IspF family. As to quaternary structure, homotrimer. A divalent metal cation is required as a cofactor.

It carries out the reaction 4-CDP-2-C-methyl-D-erythritol 2-phosphate = 2-C-methyl-D-erythritol 2,4-cyclic diphosphate + CMP. It functions in the pathway isoprenoid biosynthesis; isopentenyl diphosphate biosynthesis via DXP pathway; isopentenyl diphosphate from 1-deoxy-D-xylulose 5-phosphate: step 4/6. Functionally, involved in the biosynthesis of isopentenyl diphosphate (IPP) and dimethylallyl diphosphate (DMAPP), two major building blocks of isoprenoid compounds. Catalyzes the conversion of 4-diphosphocytidyl-2-C-methyl-D-erythritol 2-phosphate (CDP-ME2P) to 2-C-methyl-D-erythritol 2,4-cyclodiphosphate (ME-CPP) with a corresponding release of cytidine 5-monophosphate (CMP). The chain is 2-C-methyl-D-erythritol 2,4-cyclodiphosphate synthase from Acaryochloris marina (strain MBIC 11017).